The chain runs to 338 residues: Nodulation outer protein L (338 aa).

Positions 1 to 14 are enriched in polar residues; the sequence is MDINSTSPLNASPQ. 4 disordered regions span residues 1-48, 85-158, 187-209, and 230-259; these read MDIN…LPQV, TRER…DLET, SPAP…PHAR, and PQAG…SSAG. Residues 85–97 are compositionally biased toward basic and acidic residues; the sequence is TRERSPHPSEQRP. Positions 126 to 138 are enriched in polar residues; sequence VGPSRSGPSQAGL. A compositionally biased stretch (polar residues) spans 242-258; it reads SGPSQARPSHAWPSSSA.

The protein localises to the secreted. Its function is as follows. Putative symbiotic effector that modulates nodulation in legumes. When delivered into the plant cell, modulates the activity of signal transduction pathways that culminate in activation of PR proteins. In Sinorhizobium fredii (strain NBRC 101917 / NGR234), this protein is Nodulation outer protein L (nopL).